Here is a 95-residue protein sequence, read N- to C-terminus: Pyrimidine/purine nucleoside phosphorylase (95 aa).

Belongs to the nucleoside phosphorylase PpnP family.

It catalyses the reaction a purine D-ribonucleoside + phosphate = a purine nucleobase + alpha-D-ribose 1-phosphate. It carries out the reaction adenosine + phosphate = alpha-D-ribose 1-phosphate + adenine. The catalysed reaction is cytidine + phosphate = cytosine + alpha-D-ribose 1-phosphate. The enzyme catalyses guanosine + phosphate = alpha-D-ribose 1-phosphate + guanine. It catalyses the reaction inosine + phosphate = alpha-D-ribose 1-phosphate + hypoxanthine. It carries out the reaction thymidine + phosphate = 2-deoxy-alpha-D-ribose 1-phosphate + thymine. The catalysed reaction is uridine + phosphate = alpha-D-ribose 1-phosphate + uracil. The enzyme catalyses xanthosine + phosphate = alpha-D-ribose 1-phosphate + xanthine. Its function is as follows. Catalyzes the phosphorolysis of diverse nucleosides, yielding D-ribose 1-phosphate and the respective free bases. Can use uridine, adenosine, guanosine, cytidine, thymidine, inosine and xanthosine as substrates. Also catalyzes the reverse reactions. This is Pyrimidine/purine nucleoside phosphorylase from Edwardsiella ictaluri (strain 93-146).